A 194-amino-acid polypeptide reads, in one-letter code: Large ribosomal subunit protein eL15 (194 aa).

The tract at residues 165–194 is disordered; that stretch reads AGKKGRGLMNKGKGAEKVRPGIRANKKLGK.

Belongs to the eukaryotic ribosomal protein eL15 family.

This Methanococcus aeolicus (strain ATCC BAA-1280 / DSM 17508 / OCM 812 / Nankai-3) protein is Large ribosomal subunit protein eL15.